A 334-amino-acid chain; its full sequence is 6-phosphogluconolactonase (334 aa).

The protein belongs to the cycloisomerase 2 family.

The catalysed reaction is 6-phospho-D-glucono-1,5-lactone + H2O = 6-phospho-D-gluconate + H(+). The protein operates within carbohydrate degradation; pentose phosphate pathway; D-ribulose 5-phosphate from D-glucose 6-phosphate (oxidative stage): step 2/3. In terms of biological role, catalyzes the hydrolysis of 6-phosphogluconolactone to 6-phosphogluconate. The protein is 6-phosphogluconolactonase of Yersinia pseudotuberculosis serotype O:1b (strain IP 31758).